Here is a 70-residue protein sequence, read N- to C-terminus: DNA-directed RNA polymerase subunit epsilon (70 aa).

This sequence belongs to the RNA polymerase subunit epsilon family. In terms of assembly, RNAP is composed of a core of 2 alpha, a beta and a beta' subunit. The core is associated with a delta subunit, and at least one of epsilon or omega. When a sigma factor is associated with the core the holoenzyme is formed, which can initiate transcription.

The catalysed reaction is RNA(n) + a ribonucleoside 5'-triphosphate = RNA(n+1) + diphosphate. A non-essential component of RNA polymerase (RNAP). The chain is DNA-directed RNA polymerase subunit epsilon from Lacticaseibacillus casei (strain BL23) (Lactobacillus casei).